The primary structure comprises 250 residues: Vacuolar protein sorting-associated protein 22 homolog 1 (250 aa).

The stretch at 35 to 55 (MKEQLSTFRSQLEEFARKHKN) forms a coiled coil.

The protein belongs to the SNF8 family. Component of the endosomal sorting complex required for transport II (ESCRT-II), composed of VPS22, VPS25 and VPS36.

It localises to the endosome. Functionally, component of the endosomal sorting complex required for transport II (ESCRT-II), which is required for multivesicular body (MVB) formation and sorting of endosomal cargo proteins into MVBs. The ESCRT-II complex is probably involved in the recruitment of the ESCRT-III complex. This Arabidopsis thaliana (Mouse-ear cress) protein is Vacuolar protein sorting-associated protein 22 homolog 1 (VP22-1).